The sequence spans 366 residues: 2-aminoethylphosphonate--pyruvate transaminase (366 aa).

N6-(pyridoxal phosphate)lysine is present on Lys194.

Belongs to the class-V pyridoxal-phosphate-dependent aminotransferase family. PhnW subfamily. In terms of assembly, homodimer. Pyridoxal 5'-phosphate serves as cofactor.

The enzyme catalyses (2-aminoethyl)phosphonate + pyruvate = phosphonoacetaldehyde + L-alanine. Its function is as follows. Involved in phosphonate degradation. The protein is 2-aminoethylphosphonate--pyruvate transaminase of Lactiplantibacillus plantarum (strain ATCC BAA-793 / NCIMB 8826 / WCFS1) (Lactobacillus plantarum).